We begin with the raw amino-acid sequence, 321 residues long: CRISPR system ring nuclease SSO1393 (321 aa).

This sequence belongs to the cOA ring nuclease family. Homodimer. Does not require a metal cofactor. is required as a cofactor.

The protein resides in the cytoplasm. The catalysed reaction is cyclic tetraadenylate = 2 5'-hydroxy-diadenylate 2',3'-cylic phosphate. Its function is as follows. CRISPR (clustered regularly interspaced short palindromic repeat) is an adaptive immune system that provides protection against mobile genetic elements (viruses, transposable elements and conjugative plasmids). CRISPR clusters contain spacers, sequences complementary to antecedent mobile elements, and target invading nucleic acids. CRISPR clusters are transcribed and processed into CRISPR RNA (crRNA). A nuclease that degrades cyclic oligoadenylates (cOA), second messengers that induce an antiviral state important for defense against invading nucleic acids. Destruction of cOA deactivates the Csx1 ribonuclease, preventing uncontrolled degradation of cellular RNA. Slowly degrades cA4 (a tetraadenylate ring) into first a linear tetraadenylate product and secondly into a linear diadenylate product with 5'-OH and 2',3'-cyclic phosphate termini. Is 10-fold less active than SSO2081, suggesting it plays a minor role in cA4 degradation. There may be 2 active sites per homodimer. The sequence is that of CRISPR system ring nuclease SSO1393 from Saccharolobus solfataricus (strain ATCC 35092 / DSM 1617 / JCM 11322 / P2) (Sulfolobus solfataricus).